The sequence spans 234 residues: Segregation and condensation protein A (234 aa).

The protein belongs to the ScpA family. As to quaternary structure, component of a cohesin-like complex composed of ScpA, ScpB and the Smc homodimer, in which ScpA and ScpB bind to the head domain of Smc. The presence of the three proteins is required for the association of the complex with DNA.

The protein resides in the cytoplasm. Participates in chromosomal partition during cell division. May act via the formation of a condensin-like complex containing Smc and ScpB that pull DNA away from mid-cell into both cell halves. The polypeptide is Segregation and condensation protein A (Streptococcus pyogenes serotype M3 (strain ATCC BAA-595 / MGAS315)).